A 4171-amino-acid polypeptide reads, in one-letter code: MSSDSKDQRKTYFLRVASYLLGLNIVEEKLKSTEPLEIFLDSNTNLLVFSRSEQKLELSNKMKSSAPSANVFRVVFYKTQSVPLNNDNFKSVVNVISANGTLNHVFLKSVQNVFGKELTEGNNMQLIAAVNELEESLLATVEMSGGGSLHDEIRSWKGQTGKPANDYNEAFKQLQLLVETMEERSIDELSELVECFEDTCDELWNCGTPYPQNRMKMLIEYGASYLCETITFKIDDSAIWRNDKVADQLRSAIDVCDQMLIIVRLLTAQTWKRNVEHTWEGDAMEMKFLNGFKDRLDEILSLKSLGGQLEELLEERGVREETEKTIETAMRGMAPLAYNPFTEPNWKSRLLVSERSIEGTIDRTLPILKQRLAPANGDSQSIVLSLEKLKSFLCRSNIKEKLQHEREMFLNRLVSMLSQKNQEFNEKSLQVDAKNFQFLTEVAARIVWIRQQTSQMESIRSLSKMMLNNISNYSAFASKLDEFIEKLQYAEKECFDDWCRETVGLIDNKNETINLETTGKIMYLEASNRELNVNYSDRLLRLLKEVRQLISLGFNIPSKIMSCANNGEKYYRFGVILKQIAHFYNTIDQQMIPSQQSLMLEEAIAFEKLVIPRKDASNSASKVTWNDPKQLEEFIVQLQSAEQKLSNRNRRLRNVHMELIEMVEKLMDLNIVKQNNEWKEIILKIRSKMKEEEIVHGAVKNNMKPWLIHWDFQLYKALLIQYEWGIESIQSQLSTISVSLVFADQKIQLRPTIEEIRSKYYKELCRFLRIPDKFRGVQEDENSTKFYAQMIERSMHLLPTVYEKAEQLMMKVETCDAIFVDWLVISQVDLEELIEENLKTAADWESQFKILKGKAREAERLPHELKFECILVSTAGVKSAIEDAIQRLYDALSWTLRHSISTTSQSISTFLSQAIEVLNTVPQSIDEIAEANAKHVIFAENNRRLKEEWKVMEEQLTLLRSVAGTGMEQIDNLEQTWDRFELMLDGHQSMIKDQVEVLKSNVETSVKGMKDEAEKLKARWEQFKPRNDALQGDREEMLKAIQFIKEKRVQWQQLSDGREKIEKECGQFGLEPPKMDIIDEIDEDIKQFEDNWLIYEMFNNELDTMSQEEWIVFRSKTYLFDEFLQKWMEKLKGTGSQTHMSVRLMKDVEHFKEVSSALKFCRGDVLSADHWHEMFRFLGLPRGTTIEKLKFADLLSVSKNIIENTDQLKQLNSRAQGEVAIRDAIQELTLWAAQTEFTLADYKHSNGQNLKIIKEWKESINSLKDSQALLQSLKSSPYYSQFTDKTAVWETRLADLDVFLAQMNEIQRKWIYLEPIFGRGALPSEASRFSRVDSEYRAILNDVSKDARLVSLCSRQSLKKSLEQIVDQLNRCQKALNQFLEQKRTAFPRFYFIGDDDLLEILGQSTNPQVIQTHMKKLFQGINRVQFSSTGETIISMVSSEGETVPLSKAVRIVPQVESWLQELSDEMRRTLKDLTAQAVADAQPSLAKYPSQVLCLAEEVKFSASIENNLNGSSDLNSFKSQLLEKLKAYTNMKVDDKVSDLKLKSLILDLIHHIDVVDQLLTNQAKSINSWTWQRQLRFYLVNGGIVLRQVSSEFEYTYEYQGNYAKLVHTPLTDKCYLTLTQAMYMGLGGNPYGPAGTGKTESVKALAALMGRQVLVFNCDEGIDVTSMGRIFTGIVECGAWGCFDEFNRLDSTVLSAVSMQIQTIQGAIKSRAGSCTFGGKNVQVNPNSAIFVTLNPAGKGYGGRQKMPDNLKQLFRAVVMGKPDNELISSTILYSEGFVDATALARKIVSVFQLSRQMLSKQQHYDWGLRALKVVLGGCGALRRTQTNKNETDLVVQALLLNTLSKLTFSDSERFNSLIDDIFSNVTKEMTKFEELVEPLGVAAQEMGIKLGDKQMEKVFQLYEQMRQRIGVVVVGAAGSGKSTIWKILQRSLILTKKPLKVTQFNPKAVNRSKLLGNMDMDTREWSDGIITMAAREVTKDTSVHHWIVCDGDIDPEWVEALNSVLDDNRLLTMPSGERIQFGSNVNFLFETDSLQFASPATVSRMGMIYISEEDVTPKDIVASWLVKTTEDLHADMPSWIEEHFWRCLKWVRSHKISGITSFAILKNGLTHLKASKTKTQFLVLLFNGFLPTVTPENRQEFAKGVVFQGMSVPDPKNICYDERIDGIMSYTDDVSQNVTKEEVEREDLRPFVQTADTQRYSDIIGSWLQSGNRESFLITGTTGCGKQQLLKHCFQNDPESQLASLYCSAQSSSSHLLQLIQQNCVQASNPTGRVWRPKDRPNMILFLKGINLPAPDKYGTNELLALLQQLLTYQGFFDHNLEWVSIENIQFVGSMNPIGDGAAVSISNRLFSLLRCVSLNTTDSSQLTSIYRTYLTPILEEVGERNSEIIANRMVDIYNKVQSNFRPTDSVVFLFSPRDLTNWVVSLLRHELDQGKLEAVICFEARRIFADRLPTENDKLKFEEILRNVIPISQANETVIFKEKVYVTTGTVVPGESNTGLPLTPINMSDFNQLLAKSINRFAFEIANFNCPLTSQLAFFCACIDRVLTGPGGHLFLPGRPGFGRRDSVRLVAHMHNIQVFSPPVTANFSAKQFDNELKNAITQAVTNNEHVVLILEDHQLRKNIFLQAINSLLASGNVPGLFTQQELDGLVALVSEAANQASFTGALQQFLAHRIRSLVHVVLILEVEANDFKINITENPAILKHCNVIFADRFDRNSLVEIPKIQMESQGITTTDAILTGFNDVLVNLPEHLSIQPIKYRQFVENFFQLLGYKRLTLSVRLERLKGGVSKLNEARDEVAKMQKKAGKKSKLLAEKQAEADEALKAITESMSGAEDQKLSMEQLKAATEKENVRIEEQKAKIDEQLKEVQPLIDEARRAVGSIKSESLSEIRSLRAPPEAVRDILQAVLLFMGILDTSWEAMRKFLSKSGVKDDIMNFDANRITNEIHKKVTALVKQKSNSFEEANAKRASAAAAPLAAWVKANLEYSKILEKIAPLEGEKNKLVKNLKKAEKQMENLSKGLQSVDEVVGELKRKFEVLMKEATQIKVDLDREQDTIRIAGTLVESLSGEFERWKIQIETFGEEQSKMELCSLITSAFITYLGGCSEKDRKSLLKSMCKMFNMPPTFKPLSFASLETEQLNWKTKGLPADQLSLENGSILFTSCHAPLIIDRSGQVSLFLSKFLEKSETFKAAQPDLMTQIELAIRFGKTIIIDDIVEFDSALIPILRKDLSSQGPRQVISFGGKSIDFNPDFKIYFCTRDEKVDIRPNSYVQLNIVNFTTTISALSAQLLDVAIHLEKPELEERSSSLLRDAELKKLELEGLEQLLLQQLASSQGNLLENTALLDSLNKSKESAEIITKSIVESEQLHKELTTQKDIYVPLSLFTSSLFFSFSNLQFHNPMYNYSVNTIMHLFGKTIKSCEDKSSTRVETLARQMQLTVFYHISRGIFRQDRLMFAVAFINATMPKMFQPKEWELFTGVLVDESTDLSALRVQWISPDRLQSLARIRTHLPSLFNNFQIQDDATWNEFSKTLQCENAFPKNVELKMTHFQKVLFIQAVKPERLYNCLMDFVLKTLNIPSINPPAFELKHIFQESESTEPILFILADGADPSQELSEFASSMNVPYHSISMGQGQEIAAYEAIRESASKGEWLCLNNLHLMLQAVPSIFKHLSLTTPHENFRLWLTTEGDARFPSMMLQQSLKITFEPPPGVRNNLLRTYTQIDRSTKNVITCQSIFVLAWLHALLQERRTFIPQGWTKFYEFGASDVRVAKSFVEQLTANKADWEFVRGILKFVIYGGRIENDFDFKVLDSYLNVLFCDEKINGRAGSQLVKGIDLLATTNVQEYIGHISKSVPSVDEPYLFGLPENIKYSWQIVEADRTISSIRTLALGDTKNALSDQSDKISQIVSLWKKLCQSDDLPKRELPTAIRSADPISEVLCLETINALSLIKQLHRSIGHVAKSMKTPSLASPAVQKTIQSLVFQQTPDEWDSMWAGPSDPADYLNVVVKKTRGTLQLFESSKSSSLLSSPIDFSDLFYPNIFLNALRQTTSRQIKIPLDQLILSSAWTPSQLPAKQCVQVQGLLLQGATFDSFLRETTVSSAAYSQAPIVFLAWTSESSSTITGEQIQVPVYSSSERSDLICSVNMPCRGADQWNIAAVALFLR.

The segment at 1–1598 (MSSDSKDQRK…VLRQVSSEFE (1598 aa)) is stem. Residue 115 to 122 (GKELTEGN) participates in ATP binding. 5 coiled-coil regions span residues 164–203 (ANDY…CDEL), 629–693 (KQLE…KEEE), 829–861 (DLEE…AERL), 927–1048 (EIAE…KEKR), and 1354–1383 (SRQS…LEQK). AAA regions lie at residues 1599 to 1823 (YTYE…VLGG), 1883 to 2100 (EPLG…VRSH), 2184 to 2432 (VTKE…WVVS), and 2527 to 2767 (RFAF…PIKY). Residues 1637 to 1644 (GPAGTGKT), 1921 to 1928 (GAAGSGKS), 2226 to 2233 (GTTGCGKQ), and 2565 to 2572 (GRPGFGRR) each bind ATP. A stalk region spans residues 2776–3064 (QLLGYKRLTL…VDLDREQDTI (289 aa)). Coiled coils occupy residues 2790–2877 (ERLK…KEVQ), 2999–3059 (EKIA…DLDR), and 3308–3336 (ELEE…LLLQ). 2 AAA regions span residues 3140 to 3367 (ASLE…IITK) and 3575 to 3784 (LMDF…FVEQ).

This sequence belongs to the dynein heavy chain family. As to quaternary structure, the cytoplasmic dynein complex 2 is probably composed by a heavy chain che-3 homodimer and a number of light intermediate chains.

Its subcellular location is the cell projection. The protein resides in the cilium membrane. The protein localises to the cytoplasm. It localises to the cytoskeleton. Functionally, functions as a motor for intraflagellar retrograde transport in chemosensory neurons. Functions in cilia biogenesis. The protein is Cytoplasmic dynein 2 heavy chain 1 of Caenorhabditis elegans.